Reading from the N-terminus, the 450-residue chain is SEVCFPRLGCFSDDAPWAGIVQRPLKILPWSPKDVDTRFLLYTNQNQNNYQELVADPSTITNSNFRMDRKTRFIIHGFIDKGEEDWLSNICKNLFKVESVNCICVDWKGGSRTGYTQASQNIRIVGAEVAYFVEVLKSSLGYSPSNVHVIGHSLGSHAAGEAGRRTNGTIERITGLDPAEPCFQGTPELVRLDPSDAKFVDVIHTDAAPIIPNLGFGMSQTVGHLDFFPNGGKQMPGCQKNILSQIVDIDGIWEGTRDFVACNHLRSYKYYADSILNPDGFAGFPCDSYNVFTANKCFPCPSEGCPQMGHYADRFPGKTNGVSQVFYLNTGDASNFARWRYKVSVTLSGKKVTGHILVSLFGNEGNSRQYEIYKGTLQPDNTHSDEFDSDVEVGDLQKVKFIWYNNNVINPTLPRVGASKITVERNDGKVYDFCSQETVREEVLLTLNPC.

Disulfide bonds link Cys-4–Cys-10, Cys-91–Cys-102, and Cys-91–Cys-104. Ser-153 functions as the Nucleophile in the catalytic mechanism. N-linked (GlcNAc...) asparagine glycosylation occurs at Asn-167. Asp-177 serves as the catalytic Charge relay system. 4 residues coordinate Ca(2+): Glu-188, Arg-191, Asp-193, and Asp-196. Cysteines 238 and 262 form a disulfide. The Charge relay system role is filled by His-264. Disulfide bonds link Cys-286/Cys-297, Cys-300/Cys-305, and Cys-434/Cys-450. The PLAT domain occupies 339-450 (WRYKVSVTLS…EEVLLTLNPC (112 aa)).

The protein belongs to the AB hydrolase superfamily. Lipase family. Forms a 1:1 stoichiometric complex with (pro)colipase/CLPS.

It localises to the secreted. The enzyme catalyses a triacylglycerol + H2O = a diacylglycerol + a fatty acid + H(+). The catalysed reaction is 1,2,3-tributanoylglycerol + H2O = dibutanoylglycerol + butanoate + H(+). It catalyses the reaction 1,2,3-tri-(9Z-octadecenoyl)-glycerol + H2O = di-(9Z)-octadecenoylglycerol + (9Z)-octadecenoate + H(+). It carries out the reaction all-trans-retinyl hexadecanoate + H2O = all-trans-retinol + hexadecanoate + H(+). The enzyme catalyses 1,2-di-(9Z-octadecenoyl)-glycerol + H2O = (9Z-octadecenoyl)-glycerol + (9Z)-octadecenoate + H(+). Inhibited by bile salts, is reactivated by (pro)colipase/CLPS. In terms of biological role, plays an important role in fat metabolism. It preferentially splits the esters of long-chain fatty acids at positions 1 and 3, producing mainly 2-monoacylglycerol and free fatty acids, and shows considerably higher activity against insoluble emulsified substrates than against soluble ones. This Sus scrofa (Pig) protein is Pancreatic triacylglycerol lipase (PNLIP).